The chain runs to 128 residues: Small ribosomal subunit protein eS8 (128 aa).

The interval 1–41 (MSYYQGNDSRKITGGQKGKNRDKRKYELGSPPTETKISDKD) is disordered.

The protein belongs to the eukaryotic ribosomal protein eS8 family. As to quaternary structure, part of the 30S ribosomal subunit.

This chain is Small ribosomal subunit protein eS8, found in Sulfolobus acidocaldarius (strain ATCC 33909 / DSM 639 / JCM 8929 / NBRC 15157 / NCIMB 11770).